The sequence spans 242 residues: ATP-dependent dethiobiotin synthetase BioD (242 aa).

Residue 12 to 17 (EVGKTV) participates in ATP binding. Residue Thr-16 coordinates Mg(2+). Lys-37 is an active-site residue. Residue Ser-41 participates in substrate binding. Residues Asp-51 and 112 to 115 (EGAG) contribute to the ATP site. Positions 51 and 112 each coordinate Mg(2+).

Belongs to the dethiobiotin synthetase family. As to quaternary structure, homodimer. Mg(2+) serves as cofactor.

It localises to the cytoplasm. It catalyses the reaction (7R,8S)-7,8-diammoniononanoate + CO2 + ATP = (4R,5S)-dethiobiotin + ADP + phosphate + 3 H(+). It functions in the pathway cofactor biosynthesis; biotin biosynthesis; biotin from 7,8-diaminononanoate: step 1/2. Functionally, catalyzes a mechanistically unusual reaction, the ATP-dependent insertion of CO2 between the N7 and N8 nitrogen atoms of 7,8-diaminopelargonic acid (DAPA, also called 7,8-diammoniononanoate) to form a ureido ring. This Bacillus thuringiensis (strain Al Hakam) protein is ATP-dependent dethiobiotin synthetase BioD.